Reading from the N-terminus, the 130-residue chain is Probable 15 kDa heat shock protein (130 aa).

Residues 21–130 enclose the sHSP domain; that stretch reads ERVRILAPRV…LTKKIEVRSE (110 aa).

The protein belongs to the small heat shock protein (HSP20) family.

In Leptospira interrogans serogroup Icterohaemorrhagiae serovar Lai (strain 56601), this protein is Probable 15 kDa heat shock protein (hsp15).